An 84-amino-acid chain; its full sequence is Small ribosomal subunit protein uS17 (84 aa).

This sequence belongs to the universal ribosomal protein uS17 family. Part of the 30S ribosomal subunit.

One of the primary rRNA binding proteins, it binds specifically to the 5'-end of 16S ribosomal RNA. In Clostridium perfringens (strain ATCC 13124 / DSM 756 / JCM 1290 / NCIMB 6125 / NCTC 8237 / Type A), this protein is Small ribosomal subunit protein uS17.